The following is a 1895-amino-acid chain: Probable WRKY transcription factor 19 (1895 aa).

Positions 1-85 are disordered; sequence MSEKEELPLT…SGSGLSQQLN (85 aa). Positions 10–22 are enriched in polar residues; it reads TLTSIGAATATSD. The segment covering 28–39 has biased composition (low complexity); the sequence is GSSGEGISSSSS. Positions 46-62 are enriched in polar residues; sequence MQNSPTGLMISQSSSMC. Over residues 75-85 the composition is skewed to low complexity; it reads SSGSGLSQQLN. The region spanning 291-371 is the PAH domain; the sequence is RPLTIDGGGN…LGFNTYLSKE (81 aa). Over residues 408–417 the composition is skewed to polar residues; sequence ANMQPQTEYP. Disordered stretches follow at residues 408–442, 517–538, and 580–620; these read ANMQ…SSLL, YKDR…TYLS, and EASD…ADAS. The span at 418–427 shows a compositional bias: low complexity; that stretch reads SSSAVQSFSS. Residues 428-442 show a composition bias toward polar residues; that stretch reads GQPQIPTSAPDSSLL. Residues 462–526 constitute a DNA-binding region (WRKY 1); it reads NVDKQVNDGY…YKDRHNHEPP (65 aa). A DNA-binding region (WRKY 2) is located at residues 635–700; that stretch reads SEVDNLDDGY…SLCRRGISVY (66 aa). The TIR domain maps to 666 to 808; that stretch reads KDYDVVIRYG…EIVRDALKVL (143 aa). An NB-ARC domain is found at 800–1087; the sequence is IVRDALKVLC…LDGCGFSAHV (288 aa). Residue 844 to 851 participates in ATP binding; the sequence is GTVGIGKT. 10 LRR repeats span residues 1206–1227, 1228–1249, 1259–1281, 1282–1304, 1306–1328, 1329–1351, 1352–1371, 1373–1395, 1397–1419, and 1421–1442; these read KLRL…FNPE, NLVE…KKAR, KLKK…SSAT, NLEH…ISYL, KLVF…VDLE, SLEV…SPNV, KELY…IKNL, LLEK…IYKL, HLET…SRRM, and CLRF…ISYL. Residues 1562-1583 form a disordered region; the sequence is ETVAPPSSSSEAREEEVETEET. The region spanning 1626 to 1877 is the Protein kinase domain; that stretch reads WQKGQLLGRG…AAELLNHPFV (252 aa). ATP is bound by residues 1632-1640 and lysine 1654; that span reads LGRGSLGSV. The active site involves aspartate 1758.

It belongs to the disease resistance X-TIR-NB-LRR-X family.

Its subcellular location is the nucleus. In terms of biological role, transcription factor. Interacts specifically with the W box (5'-(T)TGAC[CT]-3'), a frequently occurring elicitor-responsive cis-acting element. May act also as a disease resistance protein with a serine/threonine-protein kinase activity. This Arabidopsis thaliana (Mouse-ear cress) protein is Probable WRKY transcription factor 19 (WRKY19).